A 136-amino-acid chain; its full sequence is Large ribosomal subunit protein uL13 (136 aa).

This sequence belongs to the universal ribosomal protein uL13 family. In terms of assembly, part of the 50S ribosomal subunit.

Functionally, this protein is one of the early assembly proteins of the 50S ribosomal subunit, although it is not seen to bind rRNA by itself. It is important during the early stages of 50S assembly. This is Large ribosomal subunit protein uL13 from Thermoplasma acidophilum (strain ATCC 25905 / DSM 1728 / JCM 9062 / NBRC 15155 / AMRC-C165).